The primary structure comprises 180 residues: Uterocalin (180 aa).

The signal sequence occupies residues 1–18 (MNLLLLAMGLILPRRPHA). An intrachain disulfide couples C82 to C175. N101 carries N-linked (GlcNAc...) asparagine glycosylation.

It belongs to the calycin superfamily. Lipocalin family. In terms of tissue distribution, expressed in glandular and lumenal epithelia of the endometrium. Is transferred to the embryonic capsule, the conceptus and the yolk sac.

It is found in the secreted. In terms of biological role, binds fatty acids and retinol. Is specialized for the preattachment embryo. May be important to maintain the pregnancy and may transport small hydrophobic ligands from mother to the developing embryo. The sequence is that of Uterocalin from Equus caballus (Horse).